A 181-amino-acid chain; its full sequence is Probable nicotinate-nucleotide adenylyltransferase (181 aa).

This sequence belongs to the NadD family.

The enzyme catalyses nicotinate beta-D-ribonucleotide + ATP + H(+) = deamido-NAD(+) + diphosphate. The protein operates within cofactor biosynthesis; NAD(+) biosynthesis; deamido-NAD(+) from nicotinate D-ribonucleotide: step 1/1. Catalyzes the reversible adenylation of nicotinate mononucleotide (NaMN) to nicotinic acid adenine dinucleotide (NaAD). In Campylobacter jejuni subsp. jejuni serotype O:23/36 (strain 81-176), this protein is Probable nicotinate-nucleotide adenylyltransferase.